The primary structure comprises 642 residues: Chaperone protein DnaK (642 aa).

Thr-200 carries the phosphothreonine; by autocatalysis modification. A compositionally biased stretch (low complexity) spans 608–618; the sequence is QAESQAAGEGQ. Positions 608–642 are disordered; that stretch reads QAESQAAGEGQPDAGKKDDGNVVDAEFEEVKKDKQ.

It belongs to the heat shock protein 70 family.

Its function is as follows. Acts as a chaperone. The sequence is that of Chaperone protein DnaK from Laribacter hongkongensis (strain HLHK9).